Here is a 497-residue protein sequence, read N- to C-terminus: Tripartite motif-containing protein 5 (497 aa).

The residue at position 2 (alanine 2) is an N-acetylalanine. An RING-type zinc finger spans residues 15 to 60 (CPICLELLTEPLSLHCGHSFCQACITANHKKSMLYKEGERSCPVCR). Position 87 is a phosphoserine (serine 87). The B box-type zinc-finger motif lies at 92–133 (QKVDHCARHGEKLLLFCQEDSKVICWLCERSQEHRGHHTFLM). 4 residues coordinate Zn(2+): cysteine 97, histidine 100, cysteine 119, and histidine 125. The stretch at 137-225 (AQEYHVKLQT…LTKSETEMVQ (89 aa)) forms a coiled coil. Residues 187-200 (FEQLREILDWEESN) are required for interaction with GABARAP and for autophagy. In terms of domain architecture, B30.2/SPRY spans 283–497 (LKGMLDMFRE…VPMTLCSPSS (215 aa)).

It belongs to the TRIM/RBCC family. Can form homodimers and homotrimers. In addition to lower-order dimerization, also exhibits a higher-order multimerization and both low- and high-order multimerizations are essential for its restriction activity. Interacts with MAP3K7/TAK1, TAB2 and TAB3. Interacts with HSPA8/HSC70, PSMC2, PSMC4, PSMC5 and PSMD7. Interacts with SQSTM1. Interacts (via B30.2/SPRY domain) with HSPA1A/B. Interacts with TRIM6 and TRIM34. Interacts with BECN1; GABARAP. Interacts with ULK1 (phosphorylated form), GABARAPL1, GABARAPL2, MAP1LC3A and MAP1LC3C. Post-translationally, degraded in a proteasome-independent fashion in the absence of viral infection but in a proteasome-dependent fashion following exposure to restriction sensitive virus. Autoubiquitinated in a RING finger- and UBE2D2-dependent manner. Monoubiquitinated by TRIM21. Deubiquitinated by Yersinia YopJ. Ubiquitination may not lead to proteasomal degradation.

The protein localises to the cytoplasm. Its subcellular location is the nucleus. It carries out the reaction S-ubiquitinyl-[E2 ubiquitin-conjugating enzyme]-L-cysteine + [acceptor protein]-L-lysine = [E2 ubiquitin-conjugating enzyme]-L-cysteine + N(6)-ubiquitinyl-[acceptor protein]-L-lysine.. It participates in protein modification; protein ubiquitination. Its function is as follows. Capsid-specific restriction factor that prevents infection from non-host-adapted retroviruses. Blocks viral replication early in the life cycle, after viral entry but before reverse transcription. In addition to acting as a capsid-specific restriction factor, also acts as a pattern recognition receptor that activates innate immune signaling in response to the retroviral capsid lattice. Binding to the viral capsid triggers its E3 ubiquitin ligase activity, and in concert with the heterodimeric ubiquitin conjugating enzyme complex UBE2V1-UBE2N (also known as UBC13-UEV1A complex) generates 'Lys-63'-linked polyubiquitin chains, which in turn are catalysts in the autophosphorylation of the MAP3K7/TAK1 complex (includes TAK1, TAB2, and TAB3). Activation of the MAP3K7/TAK1 complex by autophosphorylation results in the induction and expression of NF-kappa-B and MAPK-responsive inflammatory genes, thereby leading to an innate immune response in the infected cell. Restricts infection by human immunodeficiency virus type 1 (HIV-1) and simian immunodeficiency virus (SIV-agm). Plays a role in regulating autophagy through activation of autophagy regulator BECN1 by causing its dissociation from its inhibitors BCL2 and TAB2. Also plays a role in autophagy by acting as a selective autophagy receptor which recognizes and targets HIV-1 capsid protein p24 for autophagic destruction. In Macaca mulatta (Rhesus macaque), this protein is Tripartite motif-containing protein 5 (TRIM5).